Consider the following 426-residue polypeptide: Peptidoglycan DD-endopeptidase ShyB (426 aa).

Positions 1–21 are cleaved as a signal peptide; that stretch reads MGQFRFLALIVAVLCFSVALF. Positions 32 to 48 are enriched in polar residues; the sequence is SYSVPLNQSVNTSQPPS. The disordered stretch occupies residues 32-55; sequence SYSVPLNQSVNTSQPPSSEMVPSD. 3 residues coordinate Zn(2+): His-291, Asp-295, and His-372.

Belongs to the peptidase M23B family. Monomer. The cofactor is Zn(2+).

Its subcellular location is the periplasm. Its pathway is cell wall degradation; peptidoglycan degradation. With respect to regulation, not inhibited by metal chelator EDTA. Functionally, cell wall peptidoglycan (PG) DD-endopeptidase, which may act as a substitute for other zinc-dependent PG endopeptidases (ShyA and ShyC) during zinc starvation. Hydrolyzes peptide cross-links which covalently connect adjacent PG strands probably to allow insertion of new glycans and thus cell wall expansion. Degrades purified whole PG sacculi in vitro. It is unclear how it is able to function in low zinc environments, but that may possibly be due to binding zinc with very high affinity, utilizing an alternative metal cofactor or that it may function independently of a bound metal cofactor. In Vibrio cholerae serotype O1 (strain ATCC 39315 / El Tor Inaba N16961), this protein is Peptidoglycan DD-endopeptidase ShyB.